The following is a 237-amino-acid chain: Large ribosomal subunit protein uL1 (237 aa).

This sequence belongs to the universal ribosomal protein uL1 family. Part of the 50S ribosomal subunit.

Its function is as follows. Binds directly to 23S rRNA. The L1 stalk is quite mobile in the ribosome, and is involved in E site tRNA release. Protein L1 is also a translational repressor protein, it controls the translation of the L11 operon by binding to its mRNA. The chain is Large ribosomal subunit protein uL1 from Chloroflexus aggregans (strain MD-66 / DSM 9485).